Consider the following 581-residue polypeptide: Putative ABC transporter ATP-binding protein MM_1996 (581 aa).

An ABC transporter 1 domain is found at Ile-10 to Arg-250. Gly-44–Ser-51 provides a ligand contact to ATP. Positions Gly-287 to Asn-309 are disordered. Polar residues predominate over residues Ser-300–Asn-309. Positions Val-313–Thr-541 constitute an ABC transporter 2 domain. ATP is bound at residue Gly-346–Ser-353.

This sequence belongs to the ABC transporter superfamily.

It is found in the cell membrane. Its function is as follows. Probably part of an ABC transporter complex. Responsible for energy coupling to the transport system. The chain is Putative ABC transporter ATP-binding protein MM_1996 from Methanosarcina mazei (strain ATCC BAA-159 / DSM 3647 / Goe1 / Go1 / JCM 11833 / OCM 88) (Methanosarcina frisia).